We begin with the raw amino-acid sequence, 106 residues long: HIG1 domain family member 2A, mitochondrial (106 aa).

A2 bears the N-acetylalanine mark. In terms of domain architecture, HIG1 spans 20–106; the sequence is VIEGLSPTVY…LAVTAMKSRP (87 aa). The next 2 helical transmembrane spans lie at 47-67 and 83-103; these read PVVP…LYSF and IAAQ…TAMK. At 104 to 106 the chain is on the mitochondrial matrix side; it reads SRP.

Associates with cytochrome c oxidase (COX, complex IV); proposed complex component.

It is found in the mitochondrion membrane. The protein localises to the mitochondrion inner membrane. In terms of biological role, proposed subunit of cytochrome c oxidase (COX, complex IV), which is the terminal component of the mitochondrial respiratory chain that catalyzes the reduction of oxygen to water. May be involved in cytochrome c oxidase activity. May play a role in the assembly of respiratory supercomplexes. The chain is HIG1 domain family member 2A, mitochondrial (HIGD2A) from Homo sapiens (Human).